We begin with the raw amino-acid sequence, 172 residues long: Dual-action ribosomal maturation protein DarP (172 aa).

This sequence belongs to the DarP family.

It localises to the cytoplasm. In terms of biological role, member of a network of 50S ribosomal subunit biogenesis factors which assembles along the 30S-50S interface, preventing incorrect 23S rRNA structures from forming. Promotes peptidyl transferase center (PTC) maturation. The protein is Dual-action ribosomal maturation protein DarP of Azotobacter vinelandii (strain DJ / ATCC BAA-1303).